Consider the following 807-residue polypeptide: Glycerol-3-phosphate acyltransferase (807 aa).

The HXXXXD motif signature appears at C305–M310.

The protein belongs to the GPAT/DAPAT family.

The protein localises to the cell inner membrane. It catalyses the reaction sn-glycerol 3-phosphate + an acyl-CoA = a 1-acyl-sn-glycero-3-phosphate + CoA. It participates in phospholipid metabolism; CDP-diacylglycerol biosynthesis; CDP-diacylglycerol from sn-glycerol 3-phosphate: step 1/3. The chain is Glycerol-3-phosphate acyltransferase from Shigella boydii serotype 18 (strain CDC 3083-94 / BS512).